Consider the following 152-residue polypeptide: MLRGANAINLDTKGRIAIPTRYRDWLGDTCQGQFVCTIDIQSPCLLIYPLNEWLLIETKLRALSSTNPQERRLQRLILGYATESELDKSGRALIAPTLRQHAKLQKKVMLVGQLNKFELWDEDMWNQQIKNDLEDGLPTGIELSSGLREFSL.

SpoVT-AbrB domains lie at 5–52 (ANAI…PLNE) and 81–124 (ATES…DEDM).

This sequence belongs to the MraZ family. In terms of assembly, forms oligomers.

Its subcellular location is the cytoplasm. The protein resides in the nucleoid. The protein is Transcriptional regulator MraZ of Psychromonas ingrahamii (strain DSM 17664 / CCUG 51855 / 37).